The chain runs to 317 residues: Olfactory receptor 1082 (317 aa).

At 1-26 (MESGNSTRRFSSFFLLGFTENPQLHF) the chain is on the extracellular side. Asparagine 5 carries N-linked (GlcNAc...) asparagine glycosylation. A helical transmembrane segment spans residues 27 to 51 (LIFALFLSMYLVTVLGNLLIIMAII). At 52–58 (TQSHLHT) the chain is on the cytoplasmic side. The chain crosses the membrane as a helical span at residues 59–80 (PMYFFLANLSFVDICFTSTTIP). At 81–101 (KMLVNIYTQSKSITYEDCISQ) the chain is on the extracellular side. Cysteine 98 and cysteine 190 form a disulfide bridge. Residues 102–121 (MCVFLVFAELGNFLLAVMAY) traverse the membrane as a helical segment. Over 122–140 (DRYVAXCHPLCYTVIVNHR) the chain is Cytoplasmic. The helical transmembrane segment at 141 to 159 (LCILLLLLSWVISIFHAFI) threads the bilayer. At 160 to 197 (QSLIVLQLTFCGDVKIPHFFCELNQLSQLTCSDNFPSH) the chain is on the extracellular side. A helical membrane pass occupies residues 198 to 220 (LIMNLVPVMLAAISFSGILYSYF). Residues 221–237 (KIVSSIHSISTVQGKYK) are Cytoplasmic-facing. The chain crosses the membrane as a helical span at residues 238–261 (AFSTCASHLSIVSLFYSTGLGVYV). Residues 262–273 (SSAVVQSSHSAA) are Extracellular-facing. Residues 274 to 293 (SASVMYTVVTPMLNPFIYSL) traverse the membrane as a helical segment. Over 294–317 (RNKDVKRALERLLEGNCKVHHWTG) the chain is Cytoplasmic.

It belongs to the G-protein coupled receptor 1 family. As to expression, olfactory epithelium.

The protein localises to the cell membrane. Its function is as follows. Odorant receptor. The sequence is that of Olfactory receptor 1082 (Olr1082) from Rattus norvegicus (Rat).